The primary structure comprises 571 residues: Proline--tRNA ligase (571 aa).

This sequence belongs to the class-II aminoacyl-tRNA synthetase family. ProS type 1 subfamily. As to quaternary structure, homodimer.

The protein localises to the cytoplasm. It carries out the reaction tRNA(Pro) + L-proline + ATP = L-prolyl-tRNA(Pro) + AMP + diphosphate. Catalyzes the attachment of proline to tRNA(Pro) in a two-step reaction: proline is first activated by ATP to form Pro-AMP and then transferred to the acceptor end of tRNA(Pro). As ProRS can inadvertently accommodate and process non-cognate amino acids such as alanine and cysteine, to avoid such errors it has two additional distinct editing activities against alanine. One activity is designated as 'pretransfer' editing and involves the tRNA(Pro)-independent hydrolysis of activated Ala-AMP. The other activity is designated 'posttransfer' editing and involves deacylation of mischarged Ala-tRNA(Pro). The misacylated Cys-tRNA(Pro) is not edited by ProRS. The chain is Proline--tRNA ligase from Pseudomonas paraeruginosa (strain DSM 24068 / PA7) (Pseudomonas aeruginosa (strain PA7)).